A 2410-amino-acid polypeptide reads, in one-letter code: Genome polyprotein 1 (2410 aa).

The disordered stretch occupies residues 1–21 (MEQTLAQAVSRRNKTDTPMAE). The Helicase ATP-binding domain occupies 474-632 (AMADANNCWS…AARKYPLHVE (159 aa)). 487 to 494 (GHTGSGKS) provides a ligand contact to ATP. The DEAH box signature appears at 583-586 (DEAH). The Helicase C-terminal domain occupies 647–813 (GGGDLLDISK…NVPFYMNETF (167 aa)). O-(5'-phospho-RNA)-tyrosine is present on Tyr-1234. Positions 1359–1573 (ITLEASTGIL…CGYASHTALF (215 aa)) constitute a Peptidase C4 domain. Active-site for nuclear inclusion protein A activity residues include His-1404, Asp-1440, and Cys-1507. Residues 1857 to 1980 (WLHGSGDGSR…AISPQFDEEF (124 aa)) form the RdRp catalytic domain. The segment at 2175 to 2200 (MPTEDDGKLKTPSGARIPSSAADGNW) is disordered.

This sequence belongs to the bymoviruses polyprotein 1 family. In terms of processing, VPg is uridylylated by the polymerase and is covalently attached to the 5'-end of the genomic RNA. This uridylylated form acts as a nucleotide-peptide primer for the polymerase. Post-translationally, the viral RNA1 of bymoviruses is expressed as a single polyprotein which undergoes post-translational proteolytic processing by the main proteinase NIa-pro resulting in the production of at least eight individual proteins.

It is found in the host cytoplasmic vesicle. The protein localises to the virion. The catalysed reaction is RNA(n) + a ribonucleoside 5'-triphosphate = RNA(n+1) + diphosphate. It carries out the reaction Hydrolyzes glutaminyl bonds, and activity is further restricted by preferences for the amino acids in P6 - P1' that vary with the species of potyvirus, e.g. Glu-Xaa-Xaa-Tyr-Xaa-Gln-|-(Ser or Gly) for the enzyme from tobacco etch virus. The natural substrate is the viral polyprotein, but other proteins and oligopeptides containing the appropriate consensus sequence are also cleaved.. Indispensable for virus replication. Its function is as follows. Mediates the cap-independent, EIF4E-dependent translation of viral genomic RNAs. Binds to the cap-binding site of host EIF4E and thus interferes with the host EIF4E-dependent mRNA export and translation. VPg-RNA directly binds EIF4E and is a template for transcription. Also forms trimeric complexes with EIF4E-EIF4G, which are templates for translation. Functionally, has RNA-binding and proteolytic activities. In terms of biological role, an RNA-dependent RNA polymerase that plays an essential role in the virus replication. The sequence is that of Genome polyprotein 1 from Hordeum vulgare (Barley).